Consider the following 221-residue polypeptide: Phosphoribosylformylglycinamidine synthase subunit PurQ (221 aa).

In terms of domain architecture, Glutamine amidotransferase type-1 spans 2–221 (KTAVIQFPGS…VFESLKTVKK (220 aa)). Catalysis depends on C87, which acts as the Nucleophile. Residues H195 and E197 contribute to the active site.

As to quaternary structure, part of the FGAM synthase complex composed of 1 PurL, 1 PurQ and 2 PurS subunits.

It localises to the cytoplasm. It catalyses the reaction N(2)-formyl-N(1)-(5-phospho-beta-D-ribosyl)glycinamide + L-glutamine + ATP + H2O = 2-formamido-N(1)-(5-O-phospho-beta-D-ribosyl)acetamidine + L-glutamate + ADP + phosphate + H(+). The catalysed reaction is L-glutamine + H2O = L-glutamate + NH4(+). It functions in the pathway purine metabolism; IMP biosynthesis via de novo pathway; 5-amino-1-(5-phospho-D-ribosyl)imidazole from N(2)-formyl-N(1)-(5-phospho-D-ribosyl)glycinamide: step 1/2. Part of the phosphoribosylformylglycinamidine synthase complex involved in the purines biosynthetic pathway. Catalyzes the ATP-dependent conversion of formylglycinamide ribonucleotide (FGAR) and glutamine to yield formylglycinamidine ribonucleotide (FGAM) and glutamate. The FGAM synthase complex is composed of three subunits. PurQ produces an ammonia molecule by converting glutamine to glutamate. PurL transfers the ammonia molecule to FGAR to form FGAM in an ATP-dependent manner. PurS interacts with PurQ and PurL and is thought to assist in the transfer of the ammonia molecule from PurQ to PurL. This Deinococcus radiodurans (strain ATCC 13939 / DSM 20539 / JCM 16871 / CCUG 27074 / LMG 4051 / NBRC 15346 / NCIMB 9279 / VKM B-1422 / R1) protein is Phosphoribosylformylglycinamidine synthase subunit PurQ.